The primary structure comprises 536 residues: Coilin (536 aa).

Residues 96–316 (AETCNDGAQN…QHSQSPTSDS (221 aa)) are disordered. The span at 171-180 (KTHKGKRTKK) shows a compositional bias: basic residues. Over residues 181–192 (KSEAPIENPPDK) the composition is skewed to basic and acidic residues. The span at 213-238 (QTSSSDSSDTSSCSDQPTPTTQQKPQ) shows a compositional bias: low complexity. Polar residues-rich tracts occupy residues 239–257 (SSAK…THSV) and 303–316 (THIQ…TSDS). Tandem repeats lie at residues 353–358 (RGRGRG) and 380–385 (RGRGRG). Residues 353–385 (RGRGRGEDFSWRGQRGRWFRGQGNNSNRGRGRG) are 2 X 6 AA repeats of R-G-R-G-R-G. A disordered region spans residues 368 to 387 (GRWFRGQGNNSNRGRGRGDS). The span at 371 to 380 (FRGQGNNSNR) shows a compositional bias: low complexity. Positions 425-523 (DYSSLPLLAA…VMLNWNTLIE (99 aa)) constitute a Tudor; atypical domain.

Belongs to the coilin family. Expressed in both oocytes and somatic cells.

The protein localises to the nucleus. In Xenopus laevis (African clawed frog), this protein is Coilin (coil).